Consider the following 712-residue polypeptide: NURS complex subunit red1 (712 aa).

Residues 1-22 (MSRSINLDELRKKALESKKKNE) are compositionally biased toward basic and acidic residues. 3 disordered regions span residues 1–71 (MSRS…DRFP), 107–195 (NKTF…TTNQ), and 323–348 (DDFS…GLTM). Residues 5 to 32 (INLDELRKKALESKKKNEEDESNDSDKE) adopt a coiled-coil conformation. Residues 23 to 42 (EDESNDSDKEDGEISEDDPV) are compositionally biased toward acidic residues. The span at 130–141 (SETSDSSNTSQS) shows a compositional bias: low complexity. 2 stretches are compositionally biased toward polar residues: residues 178 to 193 (FLST…SKTT) and 327 to 348 (NSKI…GLTM). Positions 351-379 (SDYLALLRNKEEEIRRMTKLILRLESNKK) form a coiled coil. Residues 428-447 (PSISSSGASSSAATTNSDTT) are disordered. Positions 471-501 (AQIKKSEIDILNNLIEKEEGELTKYQTLVKS) form a coiled coil. Positions 545-567 (QADENSSQILSSKTSNAPNGTTE) are enriched in polar residues. The tract at residues 545–568 (QADENSSQILSSKTSNAPNGTTET) is disordered. The segment at 618–639 (FCKYETTGGVCNDDHCEASHFR) adopts a C3H1-type zinc-finger fold.

Interacts with mmi1, pla1 and rrp6.

It localises to the nucleus. Its function is as follows. Promotes the exosome-mediated degradation of mRNAs containing a DSR (determinant of selective removal) signal sequence from mitotic cells. The protein is NURS complex subunit red1 of Schizosaccharomyces pombe (strain 972 / ATCC 24843) (Fission yeast).